Here is a 122-residue protein sequence, read N- to C-terminus: Large ribosomal subunit protein uL14c (122 aa).

Belongs to the universal ribosomal protein uL14 family. As to quaternary structure, part of the 50S ribosomal subunit.

The protein resides in the plastid. It localises to the chloroplast. Functionally, binds to 23S rRNA. The chain is Large ribosomal subunit protein uL14c from Cryptomeria japonica (Japanese cedar).